The following is a 121-amino-acid chain: MQNRIEITEANLRNDRLVLTSEINDGAERKPAGRMLTDSDHFAFVYILEQDESFEYVILNEGIWSDLKAALDAGLPVFLHIGNTELELNGFHDELGYLIENIKDNANYGEEMEERVKRIFL.

Belongs to the UPF0738 family.

The sequence is that of UPF0738 protein BLi01253/BL05110 from Bacillus licheniformis (strain ATCC 14580 / DSM 13 / JCM 2505 / CCUG 7422 / NBRC 12200 / NCIMB 9375 / NCTC 10341 / NRRL NRS-1264 / Gibson 46).